We begin with the raw amino-acid sequence, 47 residues long: Thionin (47 aa).

4 disulfides stabilise this stretch: Cys3–Cys41, Cys4–Cys33, Cys12–Cys31, and Cys16–Cys27.

Belongs to the plant thionin (TC 1.C.44) family. 4 C-C subfamily.

The protein resides in the secreted. In terms of biological role, thionins are small plant proteins which are toxic to animal cells. They seem to exert their toxic effect at the level of the cell membrane. Their precise function is not known. The sequence is that of Thionin (THI1) from Pyrularia pubera (Buffalo nut).